The primary structure comprises 844 residues: 3',5'-cyclic-AMP phosphodiesterase 4A (844 aa).

The disordered stretch occupies residues methionine 1–proline 124. Phosphoserine is present on serine 13. Residues glutamine 36–arginine 46 are compositionally biased toward low complexity. The segment covering serine 51–glycine 78 has biased composition (basic and acidic residues). Positions threonine 82–histidine 91 are enriched in polar residues. A Phosphoserine; by MAPKAPK2 modification is found at serine 147. Phosphoserine is present on residues serine 152, serine 160, and serine 204. The tract at residues proline 296–glutamine 317 is disordered. The residue at position 333 (serine 333) is a Phosphoserine. The PDEase domain maps to valine 343 to serine 672. Residue lysine 344 forms a Glycyl lysine isopeptide (Lys-Gly) (interchain with G-Cter in SUMO) linkage. Residue histidine 419 is the Proton donor of the active site. Histidine 419 serves as a coordination point for 3',5'-cyclic AMP. Positions 419 and 423 each coordinate AMP. Zn(2+)-binding residues include histidine 423, histidine 459, aspartate 460, and aspartate 577. Aspartate 460, aspartate 577, glutamine 628, and phenylalanine 631 together coordinate AMP. Residue aspartate 460 coordinates Mg(2+). Aspartate 460 contributes to the Mn(2+) binding site. 2 residues coordinate 3',5'-cyclic AMP: glutamine 628 and phenylalanine 631. 2 disordered regions span residues alanine 668–proline 690 and serine 818–alanine 844. A phosphoserine mark is found at serine 672 and serine 674. Over residues cysteine 820–isoleucine 830 the composition is skewed to polar residues.

Belongs to the cyclic nucleotide phosphodiesterase family. PDE4 subfamily. Interacts with LYN (via SH3 domain). Interacts with ARRB2. It depends on Zn(2+) as a cofactor. The cofactor is Mg(2+). Mn(2+) is required as a cofactor. Phosphorylated by MAPKAPK2 at Ser-147; it counteracts PKA-induced activation of PDE4A and modulates intracellular cAMP levels. Likely involved in cellular desensitization to cAMP signaling. Post-translationally, proteolytically cleaved by CASP3. As to expression, isoform 2 is testis specific.

The protein localises to the cytoplasm. Its subcellular location is the cytosol. It localises to the membrane. It catalyses the reaction 3',5'-cyclic AMP + H2O = AMP + H(+). Its pathway is purine metabolism; 3',5'-cyclic AMP degradation; AMP from 3',5'-cyclic AMP: step 1/1. With respect to regulation, inhibited by rolipram. Functionally, hydrolyzes the second messenger 3',5'-cyclic AMP (cAMP), which is a key regulator of many important physiological processes. Efficiently hydrolyzes cAMP. This is 3',5'-cyclic-AMP phosphodiesterase 4A (Pde4a) from Rattus norvegicus (Rat).